Consider the following 202-residue polypeptide: MFLFAGLGNPGPKYAGNRHNIGFMALEAICRRHRLGPLRRRFQSLAAEGEIAGEKVIALFPETYMNESGRAVSEAQRFYKIPLDHIFVFHDELDLPPAKLRIKKGGGNAGHNGLRSITAQCGNDYFRVRLGIGHPGDKALVHAYVLNDFAKSEKPWLDAVCDACADFADLLAQKRPEEFQNRAHLFLDAQGFGEQKRVGEKG.

Residue tyrosine 14 participates in tRNA binding. The active-site Proton acceptor is the histidine 19. The tRNA site is built by tyrosine 64, asparagine 66, and asparagine 112.

Belongs to the PTH family. As to quaternary structure, monomer.

The protein resides in the cytoplasm. The catalysed reaction is an N-acyl-L-alpha-aminoacyl-tRNA + H2O = an N-acyl-L-amino acid + a tRNA + H(+). In terms of biological role, hydrolyzes ribosome-free peptidyl-tRNAs (with 1 or more amino acids incorporated), which drop off the ribosome during protein synthesis, or as a result of ribosome stalling. Functionally, catalyzes the release of premature peptidyl moieties from peptidyl-tRNA molecules trapped in stalled 50S ribosomal subunits, and thus maintains levels of free tRNAs and 50S ribosomes. This chain is Peptidyl-tRNA hydrolase, found in Xanthobacter autotrophicus (strain ATCC BAA-1158 / Py2).